A 566-amino-acid chain; its full sequence is Membrane protein insertase YidC (566 aa).

Helical transmembrane passes span 3–23 (IKRIILYVIVALLAIALFNAW), 346–366 (GWLWPISMLLFWILSAVHAVV), 369–389 (WGWSIIITTILIKIVFYWFSA), 436–456 (GGCLPMLIQVPVFIAFYYVII), and 509–529 (MWILPVIFTVFFINFPAGLVL).

The protein belongs to the OXA1/ALB3/YidC family. Type 1 subfamily. As to quaternary structure, interacts with the Sec translocase complex via SecD. Specifically interacts with transmembrane segments of nascent integral membrane proteins during membrane integration.

The protein resides in the cell inner membrane. Functionally, required for the insertion and/or proper folding and/or complex formation of integral membrane proteins into the membrane. Involved in integration of membrane proteins that insert both dependently and independently of the Sec translocase complex, as well as at least some lipoproteins. Aids folding of multispanning membrane proteins. This is Membrane protein insertase YidC from Coxiella burnetii (strain RSA 331 / Henzerling II).